A 400-amino-acid chain; its full sequence is Elongation factor Tu (400 aa).

Positions 10–210 (KPHCNVGTIG…VDTYIPIPPR (201 aa)) constitute a tr-type G domain. The tract at residues 19–26 (GHVDHGKT) is G1. 19-26 (GHVDHGKT) is a binding site for GTP. Mg(2+) is bound at residue Thr-26. Residues 60–64 (GLTIA) form a G2 region. Residues 81 to 84 (DCPG) form a G3 region. GTP contacts are provided by residues 81–85 (DCPGH) and 136–139 (NKCD). The segment at 136–139 (NKCD) is G4. The tract at residues 174–176 (SAI) is G5.

The protein belongs to the TRAFAC class translation factor GTPase superfamily. Classic translation factor GTPase family. EF-Tu/EF-1A subfamily. As to quaternary structure, monomer.

It localises to the cytoplasm. The enzyme catalyses GTP + H2O = GDP + phosphate + H(+). In terms of biological role, GTP hydrolase that promotes the GTP-dependent binding of aminoacyl-tRNA to the A-site of ribosomes during protein biosynthesis. This chain is Elongation factor Tu, found in Dehalococcoides mccartyi (strain CBDB1).